We begin with the raw amino-acid sequence, 406 residues long: MKKKLVLAYSGGLDTTVIIPWLKENYDYDVIAVCVDVGQGTETDGLEEKALKTGAVKYRLVKCEDEFVTDYIYPIVKAEATYEDKYLLGTSAARPLIAKKLVEVALEEGATAIAHGATGKGNDQVRFELTVKALAPNFEIIAPWREWNISSREEEIKYLEDRNIEVPMKKDDSYSRDKNLWHLSHEGLELEDPANMPNYERLLKLSNTIENAPNEGQFVELEFEKGIPTKVDGKTFSPSDLVKYLNEIGGKHAVGIVDLLENRVVGIKCRGVYETPGGTILYAAHREIEHLCLDRETLYFKHVVSHKLTDLVYSGRWFTPLREALCAFIDSTQQTVTGKVKLKLYKGNIIPAGVTSPYSLYNQSLASFTTGELYDHHDAQGFITLFGLPLKVNALMKEQAKKMGLK.

8–16 (AYSGGLDTT) is an ATP binding site. Tyr-86 and Ser-91 together coordinate L-citrulline. Gly-116 lines the ATP pocket. Residues Thr-118, Asn-122, and Asp-123 each contribute to the L-aspartate site. Asn-122 contacts L-citrulline. The L-citrulline site is built by Arg-126, Ser-175, Ser-184, Glu-261, and Tyr-273.

It belongs to the argininosuccinate synthase family. Type 1 subfamily. Homotetramer.

It localises to the cytoplasm. It carries out the reaction L-citrulline + L-aspartate + ATP = 2-(N(omega)-L-arginino)succinate + AMP + diphosphate + H(+). It participates in amino-acid biosynthesis; L-arginine biosynthesis; L-arginine from L-ornithine and carbamoyl phosphate: step 2/3. The protein is Argininosuccinate synthase of Brachyspira hyodysenteriae (strain ATCC 49526 / WA1).